Reading from the N-terminus, the 367-residue chain is Glycerol dehydrogenase (367 aa).

D37, G94, K95, T116, and S119 together coordinate NAD(+). D121 contributes to the glycerol binding site. NAD(+) is bound by residues S125, L127, and Y131. Residues D171, H254, and H271 each contribute to the Zn(2+) site. Residue H254 participates in glycerol binding.

Belongs to the iron-containing alcohol dehydrogenase family. Requires Zn(2+) as cofactor.

It catalyses the reaction glycerol + NAD(+) = dihydroxyacetone + NADH + H(+). It participates in polyol metabolism; glycerol fermentation; glycerone phosphate from glycerol (oxidative route): step 1/2. Its function is as follows. Catalyzes the NAD-dependent oxidation of glycerol to dihydroxyacetone (glycerone). Allows microorganisms to utilize glycerol as a source of carbon under anaerobic conditions. In Escherichia coli O6:H1 (strain CFT073 / ATCC 700928 / UPEC), this protein is Glycerol dehydrogenase (gldA).